The primary structure comprises 49 residues: Large ribosomal subunit protein bL33A (49 aa).

It belongs to the bacterial ribosomal protein bL33 family.

The protein is Large ribosomal subunit protein bL33A of Bacillus pumilus (strain SAFR-032).